The following is a 323-amino-acid chain: Protein prune homolog 2 (323 aa).

2 disordered regions span residues 1–67 and 79–110; these read MDIP…EIDI and DSFE…AEEE. A compositionally biased stretch (polar residues) spans 40–52; the sequence is PNINLSLDQSEGS. Positions 57–67 are enriched in acidic residues; sequence DNLDSPDEIDI. A CRAL-TRIO domain is found at 130 to 291; that stretch reads DMKVIEPYRR…SIIKLDEELR (162 aa).

Its subcellular location is the cytoplasm. Its function is as follows. May play an important role in regulating differentiation, survival and aggressiveness of the tumor cells. The chain is Protein prune homolog 2 (PRUNE2) from Pongo abelii (Sumatran orangutan).